Here is a 240-residue protein sequence, read N- to C-terminus: Cell division protein FtsQ (240 aa).

The Cytoplasmic segment spans residues Met1 to Arg7. A helical membrane pass occupies residues Leu8–Phe28. The Periplasmic portion of the chain corresponds to Asp29–Arg240. The region spanning Leu34–Pro102 is the POTRA domain.

It belongs to the FtsQ/DivIB family. FtsQ subfamily. In terms of assembly, part of a complex composed of FtsB, FtsL and FtsQ.

It localises to the cell inner membrane. In terms of biological role, essential cell division protein. May link together the upstream cell division proteins, which are predominantly cytoplasmic, with the downstream cell division proteins, which are predominantly periplasmic. May control correct divisome assembly. The chain is Cell division protein FtsQ from Thioalkalivibrio sp. (strain K90mix).